We begin with the raw amino-acid sequence, 141 residues long: N,N-dimethylformamidase alpha subunit (141 aa).

Heterotetramer of two DmfA1 (alpha) and two DmfA2 (beta) subunits.

It catalyses the reaction N,N-dimethylformamide + H2O = dimethylamine + formate. Hydrolyzes N,N-dimethylformamide, and to a lesser extent N,N-dimethylacetamide and N,N-diethylacetamide. Has no activity against the substituted amides N-methylformamide, N-ethylformamide, N-ethylformamide and N-methylacetamide or the unsubstituted amides formamide, nicotinamide, acetoamide, benzamide, acetamide and acrylamide. This is N,N-dimethylformamidase alpha subunit from Paracoccus aminophilus.